The primary structure comprises 196 residues: Proteasome subunit beta 1 (196 aa).

Positions 1-6 (MEELPA) are cleaved as a propeptide — removed in mature form; by autocatalysis. T7 serves as the catalytic Nucleophile.

Belongs to the peptidase T1B family. The 20S proteasome core is composed of 14 alpha and 14 beta subunits that assemble into four stacked heptameric rings, resulting in a barrel-shaped structure. The two inner rings, each composed of seven catalytic beta subunits, are sandwiched by two outer rings, each composed of seven alpha subunits. The catalytic chamber with the active sites is on the inside of the barrel. Has a gated structure, the ends of the cylinder being occluded by the N-termini of the alpha-subunits. Is capped at one or both ends by the proteasome regulatory ATPase, PAN.

Its subcellular location is the cytoplasm. The catalysed reaction is Cleavage of peptide bonds with very broad specificity.. The formation of the proteasomal ATPase PAN-20S proteasome complex, via the docking of the C-termini of PAN into the intersubunit pockets in the alpha-rings, triggers opening of the gate for substrate entry. Interconversion between the open-gate and close-gate conformations leads to a dynamic regulation of the 20S proteasome proteolysis activity. Its function is as follows. Component of the proteasome core, a large protease complex with broad specificity involved in protein degradation. The polypeptide is Proteasome subunit beta 1 (Saccharolobus solfataricus (strain ATCC 35092 / DSM 1617 / JCM 11322 / P2) (Sulfolobus solfataricus)).